A 126-amino-acid polypeptide reads, in one-letter code: Glycine cleavage system H protein (126 aa).

In terms of domain architecture, Lipoyl-binding spans 21–103; the sequence is TVTVGISNHA…YEGGWIARIK (83 aa). At Lys62 the chain carries N6-lipoyllysine.

This sequence belongs to the GcvH family. In terms of assembly, the glycine cleavage system is composed of four proteins: P, T, L and H. It depends on (R)-lipoate as a cofactor.

In terms of biological role, the glycine cleavage system catalyzes the degradation of glycine. The H protein shuttles the methylamine group of glycine from the P protein to the T protein. This chain is Glycine cleavage system H protein, found in Aliivibrio salmonicida (strain LFI1238) (Vibrio salmonicida (strain LFI1238)).